The chain runs to 532 residues: Membrane protein insertase YidC (532 aa).

The next 5 membrane-spanning stretches (helical) occupy residues 7 to 27, 336 to 356, 413 to 433, 450 to 470, and 492 to 512; these read FFIF…QSQM, LTIL…ITFI, GGFL…YMLI, LSSQ…MFFI, and PVIF…YYII.

This sequence belongs to the OXA1/ALB3/YidC family. Type 1 subfamily. In terms of assembly, interacts with the Sec translocase complex via SecD. Specifically interacts with transmembrane segments of nascent integral membrane proteins during membrane integration.

It localises to the cell membrane. Its function is as follows. Required for the insertion and/or proper folding and/or complex formation of integral membrane proteins into the membrane. Involved in integration of membrane proteins that insert both dependently and independently of the Sec translocase complex, as well as at least some lipoproteins. Aids folding of multispanning membrane proteins. This is Membrane protein insertase YidC from Buchnera aphidicola subsp. Acyrthosiphon pisum (strain Tuc7).